The following is a 472-amino-acid chain: Probable serine/threonine-protein kinase At1g01540 (472 aa).

Residues 24-44 (LWVVIGILLGSLIVIALFLLS) traverse the membrane as a helical segment. Residues Thr-67 and Thr-143 each carry the phosphothreonine modification. In terms of domain architecture, Protein kinase spans 154–431 (LCEENVIGEG…IHMLEAEDLL (278 aa)). ATP contacts are provided by residues 160-168 (IGEGGYGIV) and Lys-182. The residue at position 227 (Tyr-227) is a Phosphotyrosine. Asp-280 acts as the Proton acceptor in catalysis. A Phosphoserine modification is found at Ser-284. Phosphothreonine occurs at positions 314 and 319. At Tyr-327 the chain carries Phosphotyrosine. The segment covering 437–449 (RTTRDHGSRERQE) has biased composition (basic and acidic residues). Positions 437–472 (RTTRDHGSRERQETAVVAAGSESGESGSRHHQQKQR) are disordered. Residues 451-462 (AVVAAGSESGES) are compositionally biased toward low complexity.

Belongs to the protein kinase superfamily. Ser/Thr protein kinase family.

Its subcellular location is the membrane. It carries out the reaction L-seryl-[protein] + ATP = O-phospho-L-seryl-[protein] + ADP + H(+). The catalysed reaction is L-threonyl-[protein] + ATP = O-phospho-L-threonyl-[protein] + ADP + H(+). The sequence is that of Probable serine/threonine-protein kinase At1g01540 from Arabidopsis thaliana (Mouse-ear cress).